The primary structure comprises 264 residues: Replication-associated protein A (264 aa).

The region spanning 10–123 (RVYSKYLFLT…DVNTAEWGTF (114 aa)) is the CRESS-DNA virus Rep endonuclease domain. The RCR-1 signature appears at 17–20 (FLTY). Residues Glu-51, His-59, and His-61 each contribute to the a divalent metal cation site. The RCR-2 signature appears at 59–61 (HLH). The active-site For DNA cleavage activity is Tyr-106. Positions 106 to 109 (YITK) match the RCR-3 motif. Residue Glu-110 participates in a divalent metal cation binding. Residues 173 to 185 (TARHLFPDPVATY) are oligomerization. The LXCXE motif, interaction with host RBR1 signature appears at 194 to 198 (LICHE). The segment at 237-264 (YSRSHRGGISPSTSAGQPEQERLPGQGL) is disordered.

It belongs to the geminiviridae Rep protein family. As to quaternary structure, homooligomer. Interacts (via LXCXE domain) with host retinoblastoma-related protein 1 (RBR1), and may thereby deregulate the host cell cycle. Part of the C- and V-complexes which are RepA-Rep-DNA complexes involved in the c-sense and v-sense transcription. Mg(2+) is required as a cofactor. The cofactor is Mn(2+).

The protein resides in the host nucleus. Its subcellular location is the host cytoplasm. In terms of biological role, implicated in enhancement of V-sense gene expression. Acts a an inhibitor of C-sense gene transcription. This chain is Replication-associated protein A, found in Wheat dwarf virus (isolate Sweden) (WDV).